Here is a 41-residue protein sequence, read N- to C-terminus: Plantazolicin (41 aa).

The propeptide occupies 1–27 (MTQIKVPTALIASVHGEGQHLFEPMAA). The residue at position 28 (R28) is an N2,N2-dimethylarginine. A cross-link (thiazole-4-carboxylic acid (Arg-Cys)) is located at residues 28–29 (RC). Cross-links (5-methyloxazole-4-carboxylic acid (Cys-Thr)) lie at residues 29 to 30 (CT) and 31 to 32 (CT). Positions 30 to 31 (TC) form a cross-link, thiazole-4-carboxylic acid (Thr-Cys). A cross-link (5-methyloxazole-4-carboxylic acid (Thr-Thr)) is located at residues 32–33 (TT). A cross-link (oxazole-4-carboxylic acid (Ile-Ser)) is located at residues 35-36 (IS). Cross-links (oxazole-4-carboxylic acid (Ser-Ser)) lie at residues 36 to 37 (SS), 37 to 38 (SS), and 38 to 39 (SS). Positions 39-40 (ST) form a cross-link, 5-methyloxazoline-4-carboxylic acid (Ser-Thr).

In terms of processing, maturation of thiazole and oxazole containing antibiotics involves the enzymatic condensation of a Cys, Ser or Thr with the alpha-carbonyl of the preceding amino acid to form a thioether or ether bond, then dehydration to form a double bond with the alpha-amino nitrogen. Thiazoline or oxazoline ring are dehydrogenated to form thiazole or oxazole rings. Post-translationally, 2 forms exist: plantazolicin A and plantazolicin B. The structural difference between them is a dimethylation at Arg-28 in plantazolicin A.

The protein resides in the secreted. Its subcellular location is the cell wall. In terms of biological role, peptide antibiotic inhibiting growth of Gram-positive bacteria in the dimethylated form plantazolicin A. The desmethyl form plantazolicin B has no antibiotic activity. The mode of action appears to be disruption of cell walls and lysis of cells. Inhibits B.subtilis strain HB0042, B.megaterium strain 7A1 and B.anthracis (MIC=2-4 ug/ml). Weakly inhibits Gram-positive bacteria B.brevis strain ATCC 8246, B.subtilis strain 168, B.cereus strain ATCC 14579 and strain CU1065, B.licheniformis strain ATCC 9789, M.luteus, B.sphaericus, P.granivorans and S.pyogenes (MIC=128 ug/ml). Does not inhibit B.pumilus, P.polymyxa, Arthrobacter sp., S.aureus, vancomycin-resistant E.faecalis, L.monocytogenes, methicillin-resistant S.aureus or Gram-negative bacteria E.coli strain K12, K.terrigena, Pseudomonas sp. and E.carotovora. This chain is Plantazolicin, found in Bacillus velezensis (strain DSM 23117 / BGSC 10A6 / LMG 26770 / FZB42) (Bacillus amyloliquefaciens subsp. plantarum).